The chain runs to 195 residues: UPF0301 protein Bpro_1142 (195 aa).

It belongs to the UPF0301 (AlgH) family.

In Polaromonas sp. (strain JS666 / ATCC BAA-500), this protein is UPF0301 protein Bpro_1142.